We begin with the raw amino-acid sequence, 65 residues long: Large ribosomal subunit protein bL35 (65 aa).

It belongs to the bacterial ribosomal protein bL35 family.

This is Large ribosomal subunit protein bL35 from Rubrobacter xylanophilus (strain DSM 9941 / JCM 11954 / NBRC 16129 / PRD-1).